A 513-amino-acid chain; its full sequence is ATP synthase subunit alpha (513 aa).

169–176 (GDRKTGKS) contacts ATP.

Belongs to the ATPase alpha/beta chains family. As to quaternary structure, F-type ATPases have 2 components, CF(1) - the catalytic core - and CF(0) - the membrane proton channel. CF(1) has five subunits: alpha(3), beta(3), gamma(1), delta(1), epsilon(1). CF(0) has three main subunits: a(1), b(2) and c(9-12). The alpha and beta chains form an alternating ring which encloses part of the gamma chain. CF(1) is attached to CF(0) by a central stalk formed by the gamma and epsilon chains, while a peripheral stalk is formed by the delta and b chains.

Its subcellular location is the cell membrane. It catalyses the reaction ATP + H2O + 4 H(+)(in) = ADP + phosphate + 5 H(+)(out). Its function is as follows. Produces ATP from ADP in the presence of a proton gradient across the membrane. The alpha chain is a regulatory subunit. In Levilactobacillus brevis (strain ATCC 367 / BCRC 12310 / CIP 105137 / JCM 1170 / LMG 11437 / NCIMB 947 / NCTC 947) (Lactobacillus brevis), this protein is ATP synthase subunit alpha.